The primary structure comprises 102 residues: Co-chaperonin GroES (102 aa).

This sequence belongs to the GroES chaperonin family. As to quaternary structure, heptamer of 7 subunits arranged in a ring. Interacts with the chaperonin GroEL.

It is found in the cytoplasm. Functionally, together with the chaperonin GroEL, plays an essential role in assisting protein folding. The GroEL-GroES system forms a nano-cage that allows encapsulation of the non-native substrate proteins and provides a physical environment optimized to promote and accelerate protein folding. GroES binds to the apical surface of the GroEL ring, thereby capping the opening of the GroEL channel. This Vibrio harveyi (Beneckea harveyi) protein is Co-chaperonin GroES.